Here is a 200-residue protein sequence, read N- to C-terminus: LexA repressor (200 aa).

The segment at residues 28–48 is a DNA-binding region (H-T-H motif); sequence RAEIAQHFGFSSPNAAEQHLK. Active-site for autocatalytic cleavage activity residues include Ser-117 and Lys-154.

The protein belongs to the peptidase S24 family. In terms of assembly, homodimer.

The catalysed reaction is Hydrolysis of Ala-|-Gly bond in repressor LexA.. In terms of biological role, represses a number of genes involved in the response to DNA damage (SOS response), including recA and lexA. In the presence of single-stranded DNA, RecA interacts with LexA causing an autocatalytic cleavage which disrupts the DNA-binding part of LexA, leading to derepression of the SOS regulon and eventually DNA repair. This is LexA repressor from Thiobacillus denitrificans (strain ATCC 25259 / T1).